The following is a 563-amino-acid chain: Kelch repeat and BTB domain-containing protein 1 (563 aa).

The BTB domain occupies 21–88 (CDINIVINDE…IYGIPLSLTN (68 aa)). One can recognise a BACK domain in the interval 123–219 (CIDFYIYADK…SLLSPQVIKS (97 aa)). Kelch repeat units lie at residues 252-297 (IELI…VMDN), 298-346 (IIYM…VDDE), 347-395 (YIYC…MLNG), 397-441 (IYVI…VHAG), 442-492 (KIYI…SVHN), and 494-540 (LYVG…PIKH).

Interacts (via BTB domain) with host CUL3.

It localises to the host cytoplasm. In terms of biological role, probable substrate-specific adapter of CUL3-containing E3 ubiquitin-protein ligases which mediate the ubiquitination and subsequent proteasomal degradation of host target proteins. This Mus musculus (Mouse) protein is Kelch repeat and BTB domain-containing protein 1 (KBTB1).